Here is a 570-residue protein sequence, read N- to C-terminus: Periplasmic trehalase (570 aa).

An N-terminal signal peptide occupies residues 1–34 (MIPPEIRRSVLLQKAIKLALAGTLLTFASFSATA). Substrate is bound by residues R159, 166–167 (WD), N203, 212–214 (RSQ), 284–286 (RPE), and G317. Active-site proton donor/acceptor residues include D319 and E503. E518 is a substrate binding site. The tract at residues 544-570 (KPCDSVPSTRPASLSATPTKTPSAATQ) is disordered. The span at 554–570 (PASLSATPTKTPSAATQ) shows a compositional bias: low complexity.

It belongs to the glycosyl hydrolase 37 family. Monomer.

It is found in the periplasm. The enzyme catalyses alpha,alpha-trehalose + H2O = alpha-D-glucose + beta-D-glucose. Functionally, provides the cells with the ability to utilize trehalose at high osmolarity by splitting it into glucose molecules that can subsequently be taken up by the phosphotransferase-mediated uptake system. The protein is Periplasmic trehalase of Salmonella typhimurium (strain LT2 / SGSC1412 / ATCC 700720).